A 222-amino-acid polypeptide reads, in one-letter code: GTP cyclohydrolase 1 (222 aa).

Zn(2+) is bound by residues Cys-111, His-114, and Cys-182.

It belongs to the GTP cyclohydrolase I family. As to quaternary structure, toroid-shaped homodecamer, composed of two pentamers of five dimers.

It carries out the reaction GTP + H2O = 7,8-dihydroneopterin 3'-triphosphate + formate + H(+). It participates in cofactor biosynthesis; 7,8-dihydroneopterin triphosphate biosynthesis; 7,8-dihydroneopterin triphosphate from GTP: step 1/1. The protein is GTP cyclohydrolase 1 of Salmonella choleraesuis (strain SC-B67).